Reading from the N-terminus, the 375-residue chain is Period circadian protein (375 aa).

3 disordered regions span residues 27–119 (VTAP…VPPV), 140–189 (KHRE…WEGE), and 219–255 (KCQASGAGGGGSGSVGGTGNIGSGGSNAQPSTNQYTQ). A compositionally biased stretch (low complexity) spans 69 to 91 (SGNFTTGSNLHMSSVTNTSNAGT). Positions 92-113 (GTSGTGNSGGGGGGGGGAGPGN) are enriched in gly residues. Over residues 145-156 (RGRSGEKNKKSA) the composition is skewed to basic and acidic residues. The span at 224 to 243 (GAGGGGSGSVGGTGNIGSGG) shows a compositional bias: gly residues. A compositionally biased stretch (polar residues) spans 245–255 (NAQPSTNQYTQ).

Forms a heterodimer with timeless (TIM); the complex then translocates into the nucleus. Phosphorylated with a circadian rhythmicity, probably by the double-time protein (dbt). Phosphorylation could be implicated in the stability of per monomer and in the formation of heterodimer per-tim.

Its subcellular location is the nucleus. The protein resides in the cytoplasm. The protein localises to the perinuclear region. Essential for biological clock functions. Determines the period length of circadian and ultradian rhythms; an increase in PER dosage leads to shortened circadian rhythms and a decrease leads to lengthened circadian rhythms. Essential for the circadian rhythmicity of locomotor activity, eclosion behavior, and for the rhythmic component of the male courtship song that originates in the thoracic nervous system. The biological cycle depends on the rhythmic formation and nuclear localization of the TIM-PER complex. Light induces the degradation of TIM, which promotes elimination of PER. Nuclear activity of the heterodimer coordinatively regulates PER and TIM transcription through a negative feedback loop. Behaves as a negative element in circadian transcriptional loop. Does not appear to bind DNA, suggesting indirect transcriptional inhibition. The protein is Period circadian protein (per) of Drosophila sucinea (Fruit fly).